We begin with the raw amino-acid sequence, 287 residues long: Transmembrane protein 71 (287 aa).

The interval 1-25 (MYRDSPLMSTPVANDSRSDEGPSGK) is disordered. 2 consecutive transmembrane segments (helical) span residues 218–238 (AGLMHKVSFQAILLAVCLVIS) and 244–264 (FVGGELASIFTCALLITIAYV).

Belongs to the TMEM71 family.

The protein localises to the membrane. This is Transmembrane protein 71 (Tmem71) from Mus musculus (Mouse).